The following is a 329-amino-acid chain: MVRTKTWTLKKHFVGYPTNSDFELKTAELPPLKNGEVLLEALFLTVDPYMRVAAKRLKEGDTMMGQQVAKVVESKNVALPKGTIVLASPGWTTHSISDGKDLEKLLTEWPDTIPLSLALGTVGMPGLTAYFGLLEICGVKGGETVMVNAAAGAVGSVVGQIAKLKGCKVVGAVGSDEKVAYLQKLGFDVVFNYKTVESLEETLKKASPDGYDCYFDNVGGEFSNTVIGQMKKFGRIAICGAISTYNRTGPLPPGPPPEIVIYQELRMEAFVVYRWQGDARQKALKDLLKWVLEGKIQYKEYIIEGFENMPAAFMGMLKGDNLGKTIVKA.

T18 carries the phosphothreonine modification. Phosphoserine is present on S20. Residues G152 to G155, K178, Y193, N217, C239 to Y245, F270 to V272, and N321 each bind NADP(+). K178 is subject to N6-(2-hydroxyisobutyryl)lysine; alternate. K178 bears the N6-acetyllysine; alternate mark.

This sequence belongs to the NADP-dependent oxidoreductase L4BD family. Monomer or homodimer. In terms of tissue distribution, high expression in the kidney, liver, and intestine but not in leukocytes.

The protein resides in the cytoplasm. The catalysed reaction is 13,14-dihydro-15-oxo-prostaglandin E1 + NADP(+) = 15-oxoprostaglandin E1 + NADPH + H(+). It catalyses the reaction 13,14-dihydro-15-oxo-prostaglandin E2 + NADP(+) = 15-oxoprostaglandin E2 + NADPH + H(+). It carries out the reaction 13,14-dihydro-15-oxo-prostaglandin F1alpha + NADP(+) = 15-oxoprostaglandin F1alpha + NADPH + H(+). The enzyme catalyses 13,14-dihydro-15-oxo-PGF2alpha + NADP(+) = 15-oxoprostaglandin F2alpha + NADPH + H(+). The catalysed reaction is leukotriene B4 + NADP(+) = 12-oxo-leukotriene B4 + NADPH + H(+). It catalyses the reaction 20-hydroxy-leukotriene B4 + NADP(+) = 12-oxo-20-hydroxy-leukotriene B4 + NADPH + H(+). It carries out the reaction 6-trans-leukotriene B4 + NADP(+) = 12-oxo-(5S)-hydroxy-(6E,8E,10E,14Z)-eicosatetraenoate + NADPH + H(+). The enzyme catalyses (5S,12S)-dihydroxy-(6E,10E,12E,14Z)-eicosatetraenoate + NADP(+) = 12-oxo-(5S)-hydroxy-(6E,8E,10E,14Z)-eicosatetraenoate + NADPH + H(+). The catalysed reaction is an n-alkanal + NADP(+) = an alk-2-enal + NADPH + H(+). It catalyses the reaction hexanal + NADP(+) = (E)-hex-2-enal + NADPH + H(+). It carries out the reaction octanal + NADP(+) = (2E)-octenal + NADPH + H(+). The enzyme catalyses decanal + NADP(+) = (2E)-decenal + NADPH + H(+). The catalysed reaction is dodecanal + NADP(+) = (2E)-dodecenal + NADPH + H(+). It catalyses the reaction 4-hydroxynonanal + NADP(+) = (E)-4-hydroxynon-2-enal + NADPH + H(+). It carries out the reaction pentan-2-one + NADP(+) = (E)-pent-3-en-2-one + NADPH + H(+). The enzyme catalyses nonan-2-one + NADP(+) = (3E)-nonen-2-one + NADPH + H(+). NAD(P)H-dependent oxidoreductase involved in metabolic inactivation of pro- and anti-inflammatory eicosanoids: prostaglandins (PG), leukotrienes (LT) and lipoxins (LX). Catalyzes with high efficiency the reduction of the 13,14 double bond of 15-oxoPGs, including 15-oxo-PGE1, 15-oxo-PGE2, 15-oxo-PGF1-alpha and 15-oxo-PGF2-alpha. Catalyzes with lower efficiency the oxidation of the hydroxyl group at C12 of LTB4 and its derivatives, converting them into biologically less active 12-oxo-LTB4 metabolites. Reduces 15-oxo-LXA4 to 13,14 dihydro-15-oxo-LXA4, enhancing neutrophil recruitment at the inflammatory site. May play a role in metabolic detoxification of alkenals and ketones. Reduces alpha,beta-unsaturated alkenals and ketones, particularly those with medium-chain length, showing highest affinity toward (2E)-decenal and (3E)-3-nonen-2-one. May inactivate 4-hydroxy-2-nonenal, a cytotoxic lipid constituent of oxidized low-density lipoprotein particles. In Homo sapiens (Human), this protein is Prostaglandin reductase 1 (PTGR1).